The primary structure comprises 146 residues: Linear conopeptide (146 aa).

Residues 1 to 19 form the signal peptide; it reads MLRLIIAAAVLVSACLAYP. The propeptide occupies 20-34; the sequence is QRREGAPADAANLQS. A Methionine sulfoxide; partial; in Cn2 modification is found at M40. 2 propeptides span residues 58–80 and 104–146; these read FLPFNPNLQMGYKRDFDENLEKR and FLHN…DKEQ. The disordered stretch occupies residues 107–146; it reads NEKGDKHPFANVDSADTDLGQFEPSAENKNGEFRFFDKEQ. Basic and acidic residues predominate over residues 135–146; it reads KNGEFRFFDKEQ.

In terms of tissue distribution, expressed by the venom duct.

The protein resides in the secreted. This Conus consors (Singed cone) protein is Linear conopeptide.